We begin with the raw amino-acid sequence, 383 residues long: GTP-binding protein 10 (383 aa).

The 136-residue stretch at 13-148 folds into the Obg domain; the sequence is GNFIDNLRIY…RIIHLDLKLI (136 aa). The 196-residue stretch at 149–344 folds into the OBG-type G domain; it reads SDVGLVGFPN…LIGCIRKTMD (196 aa). Residues 155–162, 202–206, and 278–281 each bind GTP; these read GFPNAGKS, DLPGL, and NKMD. The segment at 362–383 is disordered; it reads LQKETSRTVKRNLKNSPQRTHH. Over residues 369–383 the composition is skewed to basic residues; sequence TVKRNLKNSPQRTHH.

This sequence belongs to the TRAFAC class OBG-HflX-like GTPase superfamily. OBG GTPase family.

It is found in the nucleus. The protein localises to the nucleolus. Its function is as follows. May be involved in the ribosome maturation process. This is GTP-binding protein 10 (gtpbp10) from Xenopus tropicalis (Western clawed frog).